Here is a 250-residue protein sequence, read N- to C-terminus: Octanoyltransferase (250 aa).

A BPL/LPL catalytic domain is found at 44–224 (GAGSDRLLLL…AVVQALNGDL (181 aa)). Residues 82–89 (RGGKITWH), 154–156 (AIG), and 167–169 (GIS) contribute to the substrate site. Catalysis depends on Cys185, which acts as the Acyl-thioester intermediate. Positions 224–250 (LPVRDHDLPRPGTTPAAPNSTRVRSMT) are disordered. Residues 239–250 (AAPNSTRVRSMT) are compositionally biased toward polar residues.

It belongs to the LipB family.

It is found in the cytoplasm. The catalysed reaction is octanoyl-[ACP] + L-lysyl-[protein] = N(6)-octanoyl-L-lysyl-[protein] + holo-[ACP] + H(+). Its pathway is protein modification; protein lipoylation via endogenous pathway; protein N(6)-(lipoyl)lysine from octanoyl-[acyl-carrier-protein]: step 1/2. In terms of biological role, catalyzes the transfer of endogenously produced octanoic acid from octanoyl-acyl-carrier-protein onto the lipoyl domains of lipoate-dependent enzymes. Lipoyl-ACP can also act as a substrate although octanoyl-ACP is likely to be the physiological substrate. This Nocardia farcinica (strain IFM 10152) protein is Octanoyltransferase.